The primary structure comprises 112 residues: FK506-binding protein 1 (112 aa).

Positions Met-1–Glu-10 are enriched in polar residues. The interval Met-1 to Phe-20 is disordered. The 89-residue stretch at Gly-24–Asn-112 folds into the PPIase FKBP-type domain.

It belongs to the FKBP-type PPIase family. FKBP1 subfamily.

It is found in the cytoplasm. It carries out the reaction [protein]-peptidylproline (omega=180) = [protein]-peptidylproline (omega=0). Its activity is regulated as follows. Inhibited by both FK506 and rapamycin. Its function is as follows. PPIases accelerate the folding of proteins. It catalyzes the cis-trans isomerization of proline imidic peptide bonds in oligopeptides. In Debaryomyces hansenii (strain ATCC 36239 / CBS 767 / BCRC 21394 / JCM 1990 / NBRC 0083 / IGC 2968) (Yeast), this protein is FK506-binding protein 1 (FPR1).